Here is a 693-residue protein sequence, read N- to C-terminus: Elongation factor G (693 aa).

Residues 8–283 (NRIRNIGIAA…AVIDYLPAPT (276 aa)) enclose the tr-type G domain. Residues 17–24 (AHIDAGKT), 81–85 (DTPGH), and 135–138 (NKMD) each bind GTP.

The protein belongs to the TRAFAC class translation factor GTPase superfamily. Classic translation factor GTPase family. EF-G/EF-2 subfamily.

The protein localises to the cytoplasm. Its function is as follows. Catalyzes the GTP-dependent ribosomal translocation step during translation elongation. During this step, the ribosome changes from the pre-translocational (PRE) to the post-translocational (POST) state as the newly formed A-site-bound peptidyl-tRNA and P-site-bound deacylated tRNA move to the P and E sites, respectively. Catalyzes the coordinated movement of the two tRNA molecules, the mRNA and conformational changes in the ribosome. This Wolinella succinogenes (strain ATCC 29543 / DSM 1740 / CCUG 13145 / JCM 31913 / LMG 7466 / NCTC 11488 / FDC 602W) (Vibrio succinogenes) protein is Elongation factor G.